The sequence spans 114 residues: Large ribosomal subunit protein bL19 (114 aa).

The protein belongs to the bacterial ribosomal protein bL19 family.

Its function is as follows. This protein is located at the 30S-50S ribosomal subunit interface and may play a role in the structure and function of the aminoacyl-tRNA binding site. The protein is Large ribosomal subunit protein bL19 of Clostridium botulinum (strain ATCC 19397 / Type A).